The chain runs to 260 residues: 3'-5' ssDNA/RNA exonuclease TatD (260 aa).

The a divalent metal cation site is built by glutamate 92, histidine 128, and histidine 153.

It belongs to the metallo-dependent hydrolases superfamily. TatD-type hydrolase family. TatD subfamily. Monomer. Requires Mg(2+) as cofactor.

It localises to the cytoplasm. 3'-5' exonuclease that prefers single-stranded DNA and RNA. May play a role in the H(2)O(2)-induced DNA damage repair. The protein is 3'-5' ssDNA/RNA exonuclease TatD of Pectobacterium atrosepticum (strain SCRI 1043 / ATCC BAA-672) (Erwinia carotovora subsp. atroseptica).